The following is a 54-amino-acid chain: uncharacterized protein (54 aa).

Positions 1–28 (MDRKKDEIQRKYREQMREKKEREKEDGS) are enriched in basic and acidic residues. The interval 1 to 29 (MDRKKDEIQRKYREQMREKKEREKEDGSS) is disordered. Residues 31 to 51 (TFEIVVVLAIIILMFFFNSVF) form a helical membrane-spanning segment.

It localises to the cell membrane. This is an uncharacterized protein from Bacillus subtilis (strain 168).